A 32-amino-acid polypeptide reads, in one-letter code: NLLQFRKMIKKMTGKEVVWYAFYGCYCGGGGK.

Tyr-26, Gly-28, and Gly-30 together coordinate Ca(2+).

Belongs to the phospholipase A2 family. Group II subfamily. Ca(2+) serves as cofactor. As to expression, expressed by the venom gland.

The protein localises to the secreted. It carries out the reaction a 1,2-diacyl-sn-glycero-3-phosphocholine + H2O = a 1-acyl-sn-glycero-3-phosphocholine + a fatty acid + H(+). Snake venom phospholipase A2 (PLA2) that inhibits neuromuscular transmission by blocking acetylcholine release from the nerve termini. PLA2 catalyzes the calcium-dependent hydrolysis of the 2-acyl groups in 3-sn-phosphoglycerides. This is Basic phospholipase A2 from Gloydius halys (Chinese water mocassin).